A 250-amino-acid polypeptide reads, in one-letter code: uncharacterized protein (250 aa).

The disordered stretch occupies residues His-182–Ala-205. Over residues Thr-190–Pro-201 the composition is skewed to pro residues. Residues Thr-230–Leu-250 traverse the membrane as a helical segment.

The protein belongs to the ascovirus HvAV ORF18 family.

The protein resides in the membrane. This is an uncharacterized protein from Spodoptera frugiperda ascovirus 1a (SfAV-1a).